The chain runs to 350 residues: B1 bradykinin receptor (350 aa).

Over 1–41 (MASRAPLELLPLNRSQLSPPNATTCDDAPEAWDLLHRVLPS) the chain is Extracellular. Residues Asn13 and Asn21 are each glycosylated (N-linked (GlcNAc...) asparagine). A helical membrane pass occupies residues 42–62 (VIIIICVCGLLGNLLVLAVLL). At 63-72 (RPRRRLNVAE) the chain is on the cytoplasmic side. A helical transmembrane segment spans residues 73–93 (MYLANLAASDLVFVLGLPFWA). Topologically, residues 94-110 (ANISNQFRWPFGGLLCR) are extracellular. Asn95 carries N-linked (GlcNAc...) asparagine glycosylation. Cysteines 109 and 186 form a disulfide. Residues 111-131 (LVNGVIKANLFISIFLVVAIS) form a helical membrane-spanning segment. The Cytoplasmic segment spans residues 132–150 (RDRYRALVHPMATRRRRQA). A helical membrane pass occupies residues 151–171 (RATCVLIWVAGSLLSVPTFLF). Topologically, residues 172–204 (RSIEAVPELNNDSACVLLHPPGAWHVARMVELN) are extracellular. N-linked (GlcNAc...) asparagine glycosylation occurs at Asn182. A helical transmembrane segment spans residues 205-225 (VLGFLLPLAAIVFFNCHILAS). The Cytoplasmic portion of the chain corresponds to 226-248 (LRGRPEVRGARCGGPPDGRTTAL). A helical membrane pass occupies residues 249–269 (ILTFVAAFLVCWTPYHFFAFL). At 270–292 (EFLTQVQVVRGCFWENFKDLGLQ) the chain is on the extracellular side. The helical transmembrane segment at 293–313 (YASFFAFINSCLNPVIYVFVG) threads the bilayer. Topologically, residues 314-350 (RLFRTRVWDLFKQCAPRRPPAVSWSHRKRVLQLFWQN) are cytoplasmic. Cys327 carries S-palmitoyl cysteine lipidation.

The protein belongs to the G-protein coupled receptor 1 family. Bradykinin receptor subfamily. BDKRB1 sub-subfamily.

The protein resides in the cell membrane. Its function is as follows. This is a receptor for bradykinin. Could be a factor in chronic pain and inflammation. This is B1 bradykinin receptor (BDKRB1) from Canis lupus familiaris (Dog).